Reading from the N-terminus, the 327-residue chain is GTPase Obg (327 aa).

The Obg domain maps to 2–160 (HLFKDSLNLI…LNLRLELSLI (159 aa)). Residues 161–326 (ADVGLVGLPN…LVSEFFSLAK (166 aa)) enclose the OBG-type G domain. GTP is bound by residues 167–174 (GLPNAGKS), 192–196 (FTTKI), 213–216 (DLPG), 280–283 (SKLD), and 307–309 (SIY). Positions 174 and 194 each coordinate Mg(2+).

It belongs to the TRAFAC class OBG-HflX-like GTPase superfamily. OBG GTPase family. In terms of assembly, monomer. It depends on Mg(2+) as a cofactor.

Its subcellular location is the cytoplasm. In terms of biological role, an essential GTPase which binds GTP, GDP and possibly (p)ppGpp with moderate affinity, with high nucleotide exchange rates and a fairly low GTP hydrolysis rate. Plays a role in control of the cell cycle, stress response, ribosome biogenesis and in those bacteria that undergo differentiation, in morphogenesis control. This is GTPase Obg from Borrelia recurrentis (strain A1).